The sequence spans 285 residues: Bifunctional protein FolD (285 aa).

Residues 166 to 168, Ser191, and Ile232 contribute to the NADP(+) site; that span reads GAS.

This sequence belongs to the tetrahydrofolate dehydrogenase/cyclohydrolase family. As to quaternary structure, homodimer.

The enzyme catalyses (6R)-5,10-methylene-5,6,7,8-tetrahydrofolate + NADP(+) = (6R)-5,10-methenyltetrahydrofolate + NADPH. It carries out the reaction (6R)-5,10-methenyltetrahydrofolate + H2O = (6R)-10-formyltetrahydrofolate + H(+). It functions in the pathway one-carbon metabolism; tetrahydrofolate interconversion. Catalyzes the oxidation of 5,10-methylenetetrahydrofolate to 5,10-methenyltetrahydrofolate and then the hydrolysis of 5,10-methenyltetrahydrofolate to 10-formyltetrahydrofolate. The polypeptide is Bifunctional protein FolD (Edwardsiella ictaluri (strain 93-146)).